A 500-amino-acid polypeptide reads, in one-letter code: Anthranilate synthase component 1 (500 aa).

L-tryptophan-binding positions include serine 49 and proline 276–methionine 278. Residue glycine 311–threonine 312 coordinates chorismate. Glutamate 338 serves as a coordination point for Mg(2+). Chorismate is bound by residues tyrosine 426, arginine 446, glycine 460–glycine 462, and glycine 462. Position 475 (glutamate 475) interacts with Mg(2+).

Belongs to the anthranilate synthase component I family. In terms of assembly, heterotetramer consisting of two non-identical subunits: a beta subunit (TrpG) and a large alpha subunit (TrpE). Mg(2+) is required as a cofactor.

The enzyme catalyses chorismate + L-glutamine = anthranilate + pyruvate + L-glutamate + H(+). It functions in the pathway amino-acid biosynthesis; L-tryptophan biosynthesis; L-tryptophan from chorismate: step 1/5. With respect to regulation, feedback inhibited by tryptophan. Functionally, part of a heterotetrameric complex that catalyzes the two-step biosynthesis of anthranilate, an intermediate in the biosynthesis of L-tryptophan. In the first step, the glutamine-binding beta subunit (TrpG) of anthranilate synthase (AS) provides the glutamine amidotransferase activity which generates ammonia as a substrate that, along with chorismate, is used in the second step, catalyzed by the large alpha subunit of AS (TrpE) to produce anthranilate. In the absence of TrpG, TrpE can synthesize anthranilate directly from chorismate and high concentrations of ammonia. In Cereibacter sphaeroides (strain ATCC 17023 / DSM 158 / JCM 6121 / CCUG 31486 / LMG 2827 / NBRC 12203 / NCIMB 8253 / ATH 2.4.1.) (Rhodobacter sphaeroides), this protein is Anthranilate synthase component 1 (trpE).